A 287-amino-acid polypeptide reads, in one-letter code: N-acetylmannosamine kinase (287 aa).

Residues 5–12 (AIDIGGTK) and 131–138 (GVGGGIII) each bind ATP. Residues His155, Cys165, Cys167, and Cys172 each coordinate Zn(2+).

This sequence belongs to the ROK (NagC/XylR) family. NanK subfamily. In terms of assembly, homodimer.

It catalyses the reaction an N-acyl-D-mannosamine + ATP = an N-acyl-D-mannosamine 6-phosphate + ADP + H(+). It participates in amino-sugar metabolism; N-acetylneuraminate degradation; D-fructose 6-phosphate from N-acetylneuraminate: step 2/5. Catalyzes the phosphorylation of N-acetylmannosamine (ManNAc) to ManNAc-6-P. The polypeptide is N-acetylmannosamine kinase (Vibrio cholerae serotype O1 (strain ATCC 39541 / Classical Ogawa 395 / O395)).